Consider the following 78-residue polypeptide: D-alanyl carrier protein (78 aa).

The Carrier domain occupies 1–78 (MAFRENVLEI…MIITQLEALK (78 aa)). Serine 36 carries the O-(pantetheine 4'-phosphoryl)serine modification.

The protein belongs to the DltC family. 4'-phosphopantetheine is transferred from CoA to a specific serine of apo-DCP.

It localises to the cytoplasm. The protein operates within cell wall biogenesis; lipoteichoic acid biosynthesis. Carrier protein involved in the D-alanylation of lipoteichoic acid (LTA). The loading of thioester-linked D-alanine onto DltC is catalyzed by D-alanine--D-alanyl carrier protein ligase DltA. The DltC-carried D-alanyl group is further transferred to cell membrane phosphatidylglycerol (PG) by forming an ester bond, probably catalyzed by DltD. D-alanylation of LTA plays an important role in modulating the properties of the cell wall in Gram-positive bacteria, influencing the net charge of the cell wall. In Listeria monocytogenes serotype 4b (strain CLIP80459), this protein is D-alanyl carrier protein.